Here is a 253-residue protein sequence, read N- to C-terminus: 2-C-methyl-D-erythritol 4-phosphate cytidylyltransferase (253 aa).

This sequence belongs to the IspD/TarI cytidylyltransferase family. IspD subfamily.

The enzyme catalyses 2-C-methyl-D-erythritol 4-phosphate + CTP + H(+) = 4-CDP-2-C-methyl-D-erythritol + diphosphate. The protein operates within isoprenoid biosynthesis; isopentenyl diphosphate biosynthesis via DXP pathway; isopentenyl diphosphate from 1-deoxy-D-xylulose 5-phosphate: step 2/6. Its function is as follows. Catalyzes the formation of 4-diphosphocytidyl-2-C-methyl-D-erythritol from CTP and 2-C-methyl-D-erythritol 4-phosphate (MEP). This chain is 2-C-methyl-D-erythritol 4-phosphate cytidylyltransferase, found in Chlorobium chlorochromatii (strain CaD3).